The primary structure comprises 414 residues: TAR DNA-binding protein 43 (414 aa).

Residues K79, K84, K95, K102, and K181 each participate in a glycyl lysine isopeptide (Lys-Gly) (interchain with G-Cter in SUMO2) cross-link. Residues 82–98 (KRKMDETDASSAVKVKR) carry the Nuclear localization signal motif. 2 consecutive RRM domains span residues 104–200 (SDLI…RCTE) and 191–262 (RKVF…NAEP). S183 carries the phosphoserine modification. Positions 216 to 414 (DVMDVFIPKP…MDSKSSGWGM (199 aa)) are interaction with UBQLN2. The Nuclear export signal signature appears at 239–250 (IAQSLCGEDLII). A compositionally biased stretch (basic and acidic residues) spans 261-274 (EPKHNSNRQLERSG). 2 disordered regions span residues 261–303 (EPKH…GNNQ) and 341–373 (ASQQ…GNNS). Residue K263 forms a Glycyl lysine isopeptide (Lys-Gly) (interchain with G-Cter in SUMO2) linkage. The segment covering 275-303 (RFGGNPGGFGNQGGFGNSRGGGAGLGNNQ) has biased composition (gly residues). The residue at position 292 (S292) is a Phosphoserine. R293 is modified (omega-N-methylarginine). Low complexity predominate over residues 342–358 (SQQNQSGPSGNNQNQGN).

In terms of assembly, homodimer. Homooligomer (via its N-terminal domain). Interacts with BRDT. Binds specifically to pyrimidine-rich motifs of TAR DNA and to single stranded TG repeated sequences. Binds to RNA, specifically to UG repeated sequences with a minimum of six contiguous repeats. Interacts with ATXN2; the interaction is RNA-dependent. Interacts with MATR3. Interacts with UBQLN2. Interacts with HNRNPA2B1. Interacts with ZNF106. Interacts with CNOT7/CAF1. Interacts with CRY2. Interacts with PPIA/CYPA; the interaction is dependent on RNA-binding activity of TARDBP and PPIase activity of PPIA/CYPA and acetylation of PPIA/CYPA at 'Lys-125' favors the interaction. In terms of processing, hyperphosphorylated in hippocampus, neocortex, and spinal cord from individuals affected with ALS and FTLDU. Phosphorylated upon cellular stress. Ubiquitinated in hippocampus, neocortex, and spinal cord from individuals affected with ALS and FTLDU. Post-translationally, cleaved to generate C-terminal fragments in hippocampus, neocortex, and spinal cord from individuals affected with ALS and FTLDU. Ubiquitously expressed. In particular, expression is high in pancreas, placenta, lung, genital tract and spleen.

It localises to the nucleus. The protein localises to the cytoplasm. It is found in the stress granule. Its subcellular location is the mitochondrion. Functionally, RNA-binding protein that is involved in various steps of RNA biogenesis and processing. Preferentially binds, via its two RNA recognition motifs RRM1 and RRM2, to GU-repeats on RNA molecules predominantly localized within long introns and in the 3'UTR of mRNAs. In turn, regulates the splicing of many non-coding and protein-coding RNAs including proteins involved in neuronal survival, as well as mRNAs that encode proteins relevant for neurodegenerative diseases. Plays a role in maintaining mitochondrial homeostasis by regulating the processing of mitochondrial transcripts. Also regulates mRNA stability by recruiting CNOT7/CAF1 deadenylase on mRNA 3'UTR leading to poly(A) tail deadenylation and thus shortening. In response to oxidative insult, associates with stalled ribosomes localized to stress granules (SGs) and contributes to cell survival. Also participates in the normal skeletal muscle formation and regeneration, forming cytoplasmic myo-granules and binding mRNAs that encode sarcomeric proteins. Plays a role in the maintenance of the circadian clock periodicity via stabilization of the CRY1 and CRY2 proteins in a FBXL3-dependent manner. Negatively regulates the expression of CDK6. Regulates the expression of HDAC6, ATG7 and VCP in a PPIA/CYPA-dependent manner. This is TAR DNA-binding protein 43 from Homo sapiens (Human).